A 250-amino-acid polypeptide reads, in one-letter code: Proteasome subunit alpha (250 aa).

It belongs to the peptidase T1A family. In terms of assembly, the 20S proteasome core is composed of 14 alpha and 14 beta subunits that assemble into four stacked heptameric rings, resulting in a barrel-shaped structure. The two inner rings, each composed of seven catalytic beta subunits, are sandwiched by two outer rings, each composed of seven alpha subunits. The catalytic chamber with the active sites is on the inside of the barrel. Has a gated structure, the ends of the cylinder being occluded by the N-termini of the alpha-subunits. Is capped by the proteasome-associated ATPase, ARC.

It is found in the cytoplasm. Its pathway is protein degradation; proteasomal Pup-dependent pathway. Its activity is regulated as follows. The formation of the proteasomal ATPase ARC-20S proteasome complex, likely via the docking of the C-termini of ARC into the intersubunit pockets in the alpha-rings, may trigger opening of the gate for substrate entry. Interconversion between the open-gate and close-gate conformations leads to a dynamic regulation of the 20S proteasome proteolysis activity. Its function is as follows. Component of the proteasome core, a large protease complex with broad specificity involved in protein degradation. The polypeptide is Proteasome subunit alpha (Mycobacterium sp. (strain JLS)).